A 433-amino-acid chain; its full sequence is Alpha-(1-&gt;3)-arabinofuranosyltransferase (433 aa).

The next 10 helical transmembrane spans lie at 118-138, 140-160, 164-184, 197-217, 224-244, 280-300, 310-330, 333-353, 356-376, and 385-405; these read LFIS…LRMF, FTLT…TETV, LVFT…LRWL, LAIG…LLPL, ALVA…PLVS, WLIL…LWLL, LFWF…VMSL, GYYS…NSVI, WPAW…LFNW, and YLKI…VLYF.

Belongs to the glycosyltransferase 87 family.

It is found in the cell membrane. It carries out the reaction Adds an alpha-D-arabinofuranosyl group from trans,octacis-decaprenylphospho-beta-D-arabinofuranose at the 3-O-position of an alpha-(1-&gt;5)-arabinofuranan chain attached to a beta-(1-&gt;5)-galactofuranan chain.. Its pathway is cell wall biogenesis; cell wall polysaccharide biosynthesis. In terms of biological role, involved in the biosynthesis of the arabinogalactan (AG) region of the mycolylarabinogalactan-peptidoglycan (mAGP) complex, an essential component of the mycobacterial cell wall. Catalyzes the addition of an arabinofuranosyl (Araf) residue from the sugar donor beta-D-arabinofuranosyl-1-monophosphoryldecaprenol (DPA) on the C-3 of an alpha-(1-&gt;5)-linked Araf from the arabinan backbone of AG. This Mycobacterium tuberculosis (strain CDC 1551 / Oshkosh) protein is Alpha-(1-&gt;3)-arabinofuranosyltransferase (aftC).